A 67-amino-acid polypeptide reads, in one-letter code: Beta-defensin 103 (67 aa).

Positions Met-1–Gly-22 are cleaved as a signal peptide. 3 cysteine pairs are disulfide-bonded: Cys-33-Cys-62, Cys-40-Cys-55, and Cys-45-Cys-63.

As to expression, highly expressed in skin and tonsils, and to a lesser extent in trachea, uterus, kidney, thymus, adenoid, pharynx and tongue. Low expression in salivary gland, bone marrow, colon, stomach, polyp and larynx. No expression in small intestine.

It is found in the secreted. Exhibits antimicrobial activity against Gram-positive bacteria S.aureus and S.pyogenes, Gram-negative bacteria P.aeruginosa and E.coli and the yeast C.albicans. Kills multiresistant S.aureus and vancomycin-resistant E.faecium. No significant hemolytic activity was observed. In Homo sapiens (Human), this protein is Beta-defensin 103 (DEFB103A).